The sequence spans 428 residues: Histidinol dehydrogenase (428 aa).

NAD(+) contacts are provided by tyrosine 125, glutamine 186, and asparagine 209. 3 residues coordinate substrate: serine 232, glutamine 254, and histidine 257. 2 residues coordinate Zn(2+): glutamine 254 and histidine 257. Catalysis depends on proton acceptor residues glutamate 322 and histidine 323. The substrate site is built by histidine 323, aspartate 356, glutamate 410, and histidine 415. Aspartate 356 is a binding site for Zn(2+). Histidine 415 contributes to the Zn(2+) binding site.

The protein belongs to the histidinol dehydrogenase family. The cofactor is Zn(2+).

It carries out the reaction L-histidinol + 2 NAD(+) + H2O = L-histidine + 2 NADH + 3 H(+). The protein operates within amino-acid biosynthesis; L-histidine biosynthesis; L-histidine from 5-phospho-alpha-D-ribose 1-diphosphate: step 9/9. In terms of biological role, catalyzes the sequential NAD-dependent oxidations of L-histidinol to L-histidinaldehyde and then to L-histidine. The protein is Histidinol dehydrogenase of Lactiplantibacillus plantarum (strain ATCC BAA-793 / NCIMB 8826 / WCFS1) (Lactobacillus plantarum).